Reading from the N-terminus, the 340-residue chain is Ketol-acid reductoisomerase (NADP(+)) (340 aa).

A KARI N-terminal Rossmann domain is found at 1–183 (MAITVYYDKD…GGGRTGIIET (183 aa)). Residues 26–29 (FGSQ), arginine 49, serine 52, serine 54, and 84–87 (DEIQ) contribute to the NADP(+) site. Residue histidine 109 is part of the active site. An NADP(+)-binding site is contributed by glycine 135. Positions 184–329 (TFKAETETDL…RNLRAMMPWI (146 aa)) constitute a KARI C-terminal knotted domain. Aspartate 192, glutamate 196, glutamate 228, and glutamate 232 together coordinate Mg(2+). Serine 253 serves as a coordination point for substrate.

Belongs to the ketol-acid reductoisomerase family. Mg(2+) is required as a cofactor.

It catalyses the reaction (2R)-2,3-dihydroxy-3-methylbutanoate + NADP(+) = (2S)-2-acetolactate + NADPH + H(+). The catalysed reaction is (2R,3R)-2,3-dihydroxy-3-methylpentanoate + NADP(+) = (S)-2-ethyl-2-hydroxy-3-oxobutanoate + NADPH + H(+). The protein operates within amino-acid biosynthesis; L-isoleucine biosynthesis; L-isoleucine from 2-oxobutanoate: step 2/4. It participates in amino-acid biosynthesis; L-valine biosynthesis; L-valine from pyruvate: step 2/4. In terms of biological role, involved in the biosynthesis of branched-chain amino acids (BCAA). Catalyzes an alkyl-migration followed by a ketol-acid reduction of (S)-2-acetolactate (S2AL) to yield (R)-2,3-dihydroxy-isovalerate. In the isomerase reaction, S2AL is rearranged via a Mg-dependent methyl migration to produce 3-hydroxy-3-methyl-2-ketobutyrate (HMKB). In the reductase reaction, this 2-ketoacid undergoes a metal-dependent reduction by NADPH to yield (R)-2,3-dihydroxy-isovalerate. This Campylobacter jejuni subsp. jejuni serotype O:23/36 (strain 81-176) protein is Ketol-acid reductoisomerase (NADP(+)).